Here is an 88-residue protein sequence, read N- to C-terminus: Small ribosomal subunit protein uS17 (88 aa).

This sequence belongs to the universal ribosomal protein uS17 family. As to quaternary structure, part of the 30S ribosomal subunit.

Functionally, one of the primary rRNA binding proteins, it binds specifically to the 5'-end of 16S ribosomal RNA. The chain is Small ribosomal subunit protein uS17 from Lactobacillus helveticus (strain DPC 4571).